We begin with the raw amino-acid sequence, 427 residues long: Ribosomal protein uS12 methylthiotransferase RimO (427 aa).

The region spanning 1–116 (MNFYVDVLGC…IAENIGKESI (116 aa)) is the MTTase N-terminal domain. Residues Cys10, Cys46, Cys79, Cys145, Cys149, and Cys152 each coordinate [4Fe-4S] cluster. A Radical SAM core domain is found at 131–360 (VDEKQYAYVK…MEEQSKISFE (230 aa)). In terms of domain architecture, TRAM spans 363–426 (EKMVGKTFKV…VYDLEGKIVE (64 aa)).

This sequence belongs to the methylthiotransferase family. RimO subfamily. [4Fe-4S] cluster is required as a cofactor.

Its subcellular location is the cytoplasm. The enzyme catalyses L-aspartate(89)-[ribosomal protein uS12]-hydrogen + (sulfur carrier)-SH + AH2 + 2 S-adenosyl-L-methionine = 3-methylsulfanyl-L-aspartate(89)-[ribosomal protein uS12]-hydrogen + (sulfur carrier)-H + 5'-deoxyadenosine + L-methionine + A + S-adenosyl-L-homocysteine + 2 H(+). In terms of biological role, catalyzes the methylthiolation of an aspartic acid residue of ribosomal protein uS12. The protein is Ribosomal protein uS12 methylthiotransferase RimO of Thermosipho africanus (strain TCF52B).